The following is a 751-amino-acid chain: WD repeat-containing protein 91 (751 aa).

The stretch at 188 to 212 (IQEENESLRHKLFALQAESSRMKKE) forms a coiled coil. Residues 264–395 (LSQSKKGPAR…ASSTESVGVR (132 aa)) form a disordered region. Residues 278-287 (SGASPTQTGS) show a composition bias toward polar residues. The segment covering 334 to 346 (RLQEHGKERRELL) has biased composition (basic and acidic residues). Positions 377 to 391 (QAETSTKMPASSTES) are enriched in polar residues. WD repeat units lie at residues 410-449 (EHHS…QTKA), 452-492 (ISKS…NLCE), 497-559 (EDMP…QQLQ), 564-603 (PEPI…CAMS), 606-645 (AHDG…LKIS), 668-706 (VQFP…KVLE), and 713-751 (GHRA…AQKS).

Belongs to the WD repeat WDR91 family.

The protein resides in the early endosome membrane. The protein localises to the late endosome membrane. Functions as a negative regulator of the PI3 kinase/PI3K activity associated with endosomal membranes. By modifying the phosphatidylinositol 3-phosphate/PtdInsP3 content of endosomal membranes may regulate endosome fusion, recycling, sorting and early to late endosome transport. The protein is WD repeat-containing protein 91 of Gallus gallus (Chicken).